The following is a 378-amino-acid chain: Peptide methionine sulfoxide reductase MsrA/MsrB (378 aa).

A peptide methionine sulfoxide reductase A region spans residues 40–197; sequence QQATLAGGCF…KVRYNYYRYA (158 aa). The active site involves cysteine 48. Residues 240–362 enclose the MsrB domain; it reads DEQIRAKLTS…NSAAMRFIPK (123 aa). Cysteine 351 (nucleophile) is an active-site residue.

In the N-terminal section; belongs to the MsrA Met sulfoxide reductase family. This sequence in the C-terminal section; belongs to the MsrB Met sulfoxide reductase family.

The catalysed reaction is L-methionyl-[protein] + [thioredoxin]-disulfide + H2O = L-methionyl-(S)-S-oxide-[protein] + [thioredoxin]-dithiol. It carries out the reaction [thioredoxin]-disulfide + L-methionine + H2O = L-methionine (S)-S-oxide + [thioredoxin]-dithiol. The enzyme catalyses L-methionyl-[protein] + [thioredoxin]-disulfide + H2O = L-methionyl-(R)-S-oxide-[protein] + [thioredoxin]-dithiol. Has an important function as a repair enzyme for proteins that have been inactivated by oxidation. Catalyzes the reversible oxidation-reduction of methionine sulfoxide in proteins to methionine. The polypeptide is Peptide methionine sulfoxide reductase MsrA/MsrB (msrAB) (Vibrio cholerae serotype O1 (strain ATCC 39315 / El Tor Inaba N16961)).